The chain runs to 232 residues: Ribonuclease 3 (232 aa).

One can recognise an RNase III domain in the interval E5–G134. E47 serves as a coordination point for Mg(2+). The active site involves D51. Mg(2+) contacts are provided by D120 and E123. The active site involves E123. Residues D160–H229 form the DRBM domain.

This sequence belongs to the ribonuclease III family. As to quaternary structure, homodimer. Mg(2+) is required as a cofactor.

It is found in the cytoplasm. The catalysed reaction is Endonucleolytic cleavage to 5'-phosphomonoester.. In terms of biological role, digests double-stranded RNA. Involved in the processing of primary rRNA transcript to yield the immediate precursors to the large and small rRNAs (23S and 16S). Processes some mRNAs, and tRNAs when they are encoded in the rRNA operon. Processes pre-crRNA and tracrRNA of type II CRISPR loci if present in the organism. This Streptococcus gordonii (strain Challis / ATCC 35105 / BCRC 15272 / CH1 / DL1 / V288) protein is Ribonuclease 3.